A 521-amino-acid polypeptide reads, in one-letter code: FAD-dependent monooxygenase mdpD (521 aa).

The tract at residues 1 to 48 is disordered; it reads MTHFPVNIASDKQEFDPERWAKTPTTESSVNGENGTAPTSGLPSRHPS. Residues 11–21 are compositionally biased toward basic and acidic residues; the sequence is DKQEFDPERWA. Positions 23–48 are enriched in polar residues; that stretch reads TPTTESSVNGENGTAPTSGLPSRHPS. FAD-binding residues include Val-94 and Arg-160. Catalysis depends on residues Arg-244 and Tyr-271. Residues Asp-369 and Gly-382 each coordinate FAD.

It belongs to the paxM FAD-dependent monooxygenase family. It depends on FAD as a cofactor.

Its pathway is secondary metabolite biosynthesis. FAD-dependent monooxygenase; part of the gene cluster that mediates the biosynthesis of monodictyphenone, a prenyl xanthone derivative. The pathway begins with the synthesis of atrochrysone thioester by the polyketide synthase (PKS) mdpG. The atrochrysone carboxyl ACP thioesterase mdpF then breaks the thioester bond and releases the atrochrysone carboxylic acid from mdpG. The atrochrysone carboxylic acid is then converted to atrochrysone which is further transformed into emodin anthrone. The next step is performed by the anthrone oxygenase mdpH that catalyzes the oxidation of emodinanthrone to emodin. Emodin is further modified to yield monodictyphenone via several steps involving mdpB, mdpC mdpJ, mdpK and mdpL. These enzymes with xptA, xptB and xptC are also proposed to be involved in the synthesis of shamixanthone from emodin. Especially, direct reduction of emodin by the short chain dehydrogenase mdpC followed by dehydration catalyzed by the scytalone dehydratase-like protein mdpB gives loss of oxygen and formation of chrysophanol intermediate in two simple steps. This Emericella nidulans (strain FGSC A4 / ATCC 38163 / CBS 112.46 / NRRL 194 / M139) (Aspergillus nidulans) protein is FAD-dependent monooxygenase mdpD.